The chain runs to 474 residues: Cryptochrome DASH (474 aa).

A Photolyase/cryptochrome alpha/beta domain is found at 2–136 (DTAVVWFRDD…ALRQRWTHTL (135 aa)). Over residues 161–171 (EAAATVRDPRS) the composition is skewed to basic and acidic residues. Residues 161–202 (EAAATVRDPRSAPETVPTPDGLTPGPVPTVESLGVSEPPTDD) form a disordered region.

The protein belongs to the DNA photolyase class-1 family. Requires FAD as cofactor. (6R)-5,10-methylene-5,6,7,8-tetrahydrofolate is required as a cofactor.

Its function is as follows. May have a photoreceptor function. Binds DNA; probably functions as a transcriptional repressor. This is Cryptochrome DASH (cry) from Natronomonas pharaonis (strain ATCC 35678 / DSM 2160 / CIP 103997 / JCM 8858 / NBRC 14720 / NCIMB 2260 / Gabara) (Halobacterium pharaonis).